A 461-amino-acid polypeptide reads, in one-letter code: GTPase Der (461 aa).

EngA-type G domains follow at residues 2–166 and 199–370; these read IKVA…PKKP and IKVA…KNYS. GTP is bound by residues 8-15, 57-61, 118-121, 205-212, 252-256, and 316-319; these read GKPNVGKS, DTGGL, NKID, GRVNVGKS, DTAGI, and NKWD. In terms of domain architecture, KH-like spans 371-455; sequence KRIPTATLNK…PIIFVARKKG (85 aa).

It belongs to the TRAFAC class TrmE-Era-EngA-EngB-Septin-like GTPase superfamily. EngA (Der) GTPase family. Associates with the 50S ribosomal subunit.

In terms of biological role, GTPase that plays an essential role in the late steps of ribosome biogenesis. This chain is GTPase Der, found in Nautilia profundicola (strain ATCC BAA-1463 / DSM 18972 / AmH).